The primary structure comprises 221 residues: Putative N-acetylmannosamine-6-phosphate 2-epimerase (221 aa).

Belongs to the NanE family.

The enzyme catalyses an N-acyl-D-glucosamine 6-phosphate = an N-acyl-D-mannosamine 6-phosphate. Its pathway is amino-sugar metabolism; N-acetylneuraminate degradation; D-fructose 6-phosphate from N-acetylneuraminate: step 3/5. Functionally, converts N-acetylmannosamine-6-phosphate (ManNAc-6-P) to N-acetylglucosamine-6-phosphate (GlcNAc-6-P). In Clostridium perfringens (strain ATCC 13124 / DSM 756 / JCM 1290 / NCIMB 6125 / NCTC 8237 / Type A), this protein is Putative N-acetylmannosamine-6-phosphate 2-epimerase.